The chain runs to 93 residues: Protamine-3 (93 aa).

The tract at residues 1 to 93 is disordered; it reads MGSRCAKLGT…QSPEPKQTRS (93 aa). The span at 37–57 shows a compositional bias: acidic residues; the sequence is EGEEEEEGEEEEEEEGEEEEL. Residues 81 to 93 show a composition bias toward polar residues; sequence EVQQSPEPKQTRS. Serine 85 carries the phosphoserine modification.

It belongs to the protamine P3 family.

The protein localises to the nucleus. It is found in the chromosome. Functionally, protamines substitute for histones in the chromatin of sperm during the haploid phase of spermatogenesis. They compact sperm DNA into a highly condensed, stable and inactive complex. The protein is Protamine-3 (PRM3) of Bos taurus (Bovine).